We begin with the raw amino-acid sequence, 428 residues long: GTPase Obg (428 aa).

Residues 1 to 158 (MFVDQVKIYV…RDVILELKVL (158 aa)) form the Obg domain. An OBG-type G domain is found at 159–329 (ADVGLVGFPS…LLFEVANLIE (171 aa)). GTP contacts are provided by residues 165–172 (GFPSVGKS), 190–194 (FTTIV), 212–215 (DLPG), 282–285 (NKMD), and 310–312 (SAV). Mg(2+)-binding residues include serine 172 and threonine 192. In terms of domain architecture, OCT spans 350-428 (KFETEGVKFD…ILEYEFEFID (79 aa)).

It belongs to the TRAFAC class OBG-HflX-like GTPase superfamily. OBG GTPase family. As to quaternary structure, monomer. It depends on Mg(2+) as a cofactor.

Its subcellular location is the cytoplasm. An essential GTPase which binds GTP, GDP and possibly (p)ppGpp with moderate affinity, with high nucleotide exchange rates and a fairly low GTP hydrolysis rate. Plays a role in control of the cell cycle, stress response, ribosome biogenesis and in those bacteria that undergo differentiation, in morphogenesis control. The protein is GTPase Obg of Bacillus cereus (strain AH820).